The following is a 154-amino-acid chain: Dau c 1 isoallergen Dau c 1.0301 (154 aa).

This sequence belongs to the BetVI family. In terms of tissue distribution, expressed in roots.

The protein is Dau c 1 isoallergen Dau c 1.0301 of Daucus carota (Wild carrot).